A 1273-amino-acid polypeptide reads, in one-letter code: Cullin-associated NEDD8-dissociated protein 2 (1273 aa).

Serine 2 carries the post-translational modification N-acetylserine. 26 HEAT repeats span residues 2–36 (STGA…LDPL), 37–74 (PWLQ…ELQK), 82–119 (DSER…KVKE), 121–157 (QVEN…ELPP), 167–205 (SVCR…RLGA), 209–246 (TFHA…ACST), 248–284 (LFVE…SVGR), 292–329 (AHLD…KCPK), 364–405 (TEDS…SRPD), 409–446 (DFHC…HTRP), 469–506 (AQVP…VLPG), 554–591 (PHLP…TLWP), 602–641 (PYVG…HLGD), 685–722 (PILA…SQGL), 727–764 (PAVR…TQPA), 768–807 (EVSG…TRPP), 809–850 (VEYS…ALSA), 894–931 (GPQR…GNLP), 933–968 (FLPF…DNLK), 970–1003 (YVED…LVFV), 1004–1040 (NPPF…DQPH), 1044–1081 (PLLK…NKPS), 1085–1121 (DLLD…DDGL), 1142–1178 (LDIC…LCPA), 1194–1231 (TCTA…NPEV), and 1241–1273 (STQI…MELS). The tract at residues 352 to 383 (YNHDSDEEEQMETEDSEFSEQESEDEYSDDDD) is disordered. A compositionally biased stretch (acidic residues) spans 356–383 (SDEEEQMETEDSEFSEQESEDEYSDDDD).

It belongs to the CAND family. Binds TBP, CNOT3 and UBE3C. Ubiquitinated and targeted for proteasomal degradation. In terms of tissue distribution, detected in heart and skeletal muscle.

The protein localises to the nucleus. Its function is as follows. Probable assembly factor of SCF (SKP1-CUL1-F-box protein) E3 ubiquitin ligase complexes that promotes the exchange of the substrate-recognition F-box subunit in SCF complexes, thereby playing a key role in the cellular repertoire of SCF complexes. This is Cullin-associated NEDD8-dissociated protein 2 (Cand2) from Rattus norvegicus (Rat).